Consider the following 354-residue polypeptide: S-adenosylmethionine:tRNA ribosyltransferase-isomerase (354 aa).

It belongs to the QueA family. As to quaternary structure, monomer.

The protein resides in the cytoplasm. The catalysed reaction is 7-aminomethyl-7-carbaguanosine(34) in tRNA + S-adenosyl-L-methionine = epoxyqueuosine(34) in tRNA + adenine + L-methionine + 2 H(+). The protein operates within tRNA modification; tRNA-queuosine biosynthesis. In terms of biological role, transfers and isomerizes the ribose moiety from AdoMet to the 7-aminomethyl group of 7-deazaguanine (preQ1-tRNA) to give epoxyqueuosine (oQ-tRNA). This is S-adenosylmethionine:tRNA ribosyltransferase-isomerase from Salmonella paratyphi A (strain ATCC 9150 / SARB42).